Reading from the N-terminus, the 380-residue chain is Glucose ABC transporter permease protein TsgB13 (380 aa).

10 consecutive transmembrane segments (helical) span residues 20-40, 59-81, 94-114, 115-135, 148-166, 202-222, 255-275, 282-301, 305-325, and 328-348; these read GTPV…LVAL, QFGL…AVYL, GQLL…SLPA, VALL…WAGI, IITS…SYLL, IPLF…VVAT, VYLF…IAEI, FRAA…ALLG, AVKV…GSSV, and AFGV…LFLI.

The protein belongs to the binding-protein-dependent transport system permease family. In terms of assembly, the complex is composed of two ATP-binding proteins (TsgD13), two transmembrane proteins (TsgB13 and TsgC13) and a solute-binding protein (TsgA13).

The protein localises to the cell membrane. Functionally, part of an ABC transporter complex involved in glucose import. Responsible for the translocation of the substrate across the membrane. In Haloferax volcanii (strain ATCC 29605 / DSM 3757 / JCM 8879 / NBRC 14742 / NCIMB 2012 / VKM B-1768 / DS2) (Halobacterium volcanii), this protein is Glucose ABC transporter permease protein TsgB13 (tsgB13).